The sequence spans 298 residues: 4-hydroxy-tetrahydrodipicolinate synthase (298 aa).

Thr-48 contributes to the pyruvate binding site. The active-site Proton donor/acceptor is Tyr-137. Lys-166 serves as the catalytic Schiff-base intermediate with substrate. A pyruvate-binding site is contributed by Ile-207.

This sequence belongs to the DapA family. As to quaternary structure, homotetramer; dimer of dimers.

It is found in the cytoplasm. The catalysed reaction is L-aspartate 4-semialdehyde + pyruvate = (2S,4S)-4-hydroxy-2,3,4,5-tetrahydrodipicolinate + H2O + H(+). Its pathway is amino-acid biosynthesis; L-lysine biosynthesis via DAP pathway; (S)-tetrahydrodipicolinate from L-aspartate: step 3/4. In terms of biological role, catalyzes the condensation of (S)-aspartate-beta-semialdehyde [(S)-ASA] and pyruvate to 4-hydroxy-tetrahydrodipicolinate (HTPA). The protein is 4-hydroxy-tetrahydrodipicolinate synthase of Campylobacter jejuni subsp. doylei (strain ATCC BAA-1458 / RM4099 / 269.97).